The primary structure comprises 181 residues: Adenine phosphoribosyltransferase (181 aa).

Belongs to the purine/pyrimidine phosphoribosyltransferase family. Homodimer.

Its subcellular location is the cytoplasm. The enzyme catalyses AMP + diphosphate = 5-phospho-alpha-D-ribose 1-diphosphate + adenine. Its pathway is purine metabolism; AMP biosynthesis via salvage pathway; AMP from adenine: step 1/1. Catalyzes a salvage reaction resulting in the formation of AMP, that is energically less costly than de novo synthesis. This Methylorubrum extorquens (strain CM4 / NCIMB 13688) (Methylobacterium extorquens) protein is Adenine phosphoribosyltransferase.